A 472-amino-acid polypeptide reads, in one-letter code: 3-isopropylmalate dehydratase large subunit (472 aa).

[4Fe-4S] cluster is bound by residues Cys-353, Cys-414, and Cys-417.

Belongs to the aconitase/IPM isomerase family. LeuC type 1 subfamily. In terms of assembly, heterodimer of LeuC and LeuD. It depends on [4Fe-4S] cluster as a cofactor.

It carries out the reaction (2R,3S)-3-isopropylmalate = (2S)-2-isopropylmalate. It participates in amino-acid biosynthesis; L-leucine biosynthesis; L-leucine from 3-methyl-2-oxobutanoate: step 2/4. Its function is as follows. Catalyzes the isomerization between 2-isopropylmalate and 3-isopropylmalate, via the formation of 2-isopropylmaleate. This is 3-isopropylmalate dehydratase large subunit from Acinetobacter baumannii (strain AB307-0294).